A 560-amino-acid polypeptide reads, in one-letter code: Alpha-farnesene synthase (560 aa).

Mg(2+) is bound by residues Asp308, Asp312, and Glu462. The DDXXD motif signature appears at 308–312 (DDIYD).

The protein belongs to the terpene synthase family. Tpsa subfamily. Mg(2+) is required as a cofactor. In terms of tissue distribution, expressed in the rind tissues of ripe fruits.

The protein resides in the cytoplasm. The enzyme catalyses (2E,6E)-farnesyl diphosphate = (3E,6E)-alpha-farnesene + diphosphate. Its pathway is secondary metabolite biosynthesis; terpenoid biosynthesis. Its function is as follows. Sesquiterpene synthase producing exclusively alpha-farnesene. Associated with the production of sesquiterpenes responsible for the aroma of the fruit. The sequence is that of Alpha-farnesene synthase from Cucumis melo (Muskmelon).